Reading from the N-terminus, the 397-residue chain is Oxysterol-binding protein homolog C354.07c (397 aa).

N-linked (GlcNAc...) asparagine glycosylation is found at N186 and N195.

The protein belongs to the OSBP family.

The protein localises to the endoplasmic reticulum. The sequence is that of Oxysterol-binding protein homolog C354.07c from Schizosaccharomyces pombe (strain 972 / ATCC 24843) (Fission yeast).